Reading from the N-terminus, the 448-residue chain is Glucose-6-phosphate isomerase (448 aa).

Glu-290 (proton donor) is an active-site residue. Residues His-311 and Lys-425 contribute to the active site.

This sequence belongs to the GPI family.

The protein localises to the cytoplasm. It carries out the reaction alpha-D-glucose 6-phosphate = beta-D-fructose 6-phosphate. Its pathway is carbohydrate biosynthesis; gluconeogenesis. The protein operates within carbohydrate degradation; glycolysis; D-glyceraldehyde 3-phosphate and glycerone phosphate from D-glucose: step 2/4. Its function is as follows. Catalyzes the reversible isomerization of glucose-6-phosphate to fructose-6-phosphate. The sequence is that of Glucose-6-phosphate isomerase from Levilactobacillus brevis (strain ATCC 367 / BCRC 12310 / CIP 105137 / JCM 1170 / LMG 11437 / NCIMB 947 / NCTC 947) (Lactobacillus brevis).